A 278-amino-acid chain; its full sequence is Troponin T, slow skeletal muscle (278 aa).

Over residues 1–37 (MSDTEEQEYEEEQPEEEAAEEEEEAPEEPEPVAEPEE) the composition is skewed to acidic residues. Disordered stretches follow at residues 1–63 (MSDT…RVDF) and 105–153 (RRRS…KKKV). Ser-2 carries the post-translational modification Phosphoserine; by CK2. A compositionally biased stretch (pro residues) spans 43-55 (SRPVVPPLIPPKI). Residues 105 to 149 (RRRSERAEQQRFRTEKERERQAKLAEEKMRKEEEEAKKRAEDDAK) are compositionally biased toward basic and acidic residues.

This sequence belongs to the troponin T family. In terms of assembly, interacts with TPM3.

Functionally, troponin T is the tropomyosin-binding subunit of troponin, the thin filament regulatory complex which confers calcium-sensitivity to striated muscle actomyosin ATPase activity. The protein is Troponin T, slow skeletal muscle (TNNT1) of Homo sapiens (Human).